The following is a 267-amino-acid chain: Phosphatidylserine decarboxylase proenzyme (267 aa).

Active-site charge relay system; for autoendoproteolytic cleavage activity residues include D78, H132, and S236. Residue S236 is the Schiff-base intermediate with substrate; via pyruvic acid; for decarboxylase activity of the active site. S236 is subject to Pyruvic acid (Ser); by autocatalysis.

It belongs to the phosphatidylserine decarboxylase family. PSD-B subfamily. Prokaryotic type I sub-subfamily. As to quaternary structure, heterodimer of a large membrane-associated beta subunit and a small pyruvoyl-containing alpha subunit. It depends on pyruvate as a cofactor. Post-translationally, is synthesized initially as an inactive proenzyme. Formation of the active enzyme involves a self-maturation process in which the active site pyruvoyl group is generated from an internal serine residue via an autocatalytic post-translational modification. Two non-identical subunits are generated from the proenzyme in this reaction, and the pyruvate is formed at the N-terminus of the alpha chain, which is derived from the carboxyl end of the proenzyme. The autoendoproteolytic cleavage occurs by a canonical serine protease mechanism, in which the side chain hydroxyl group of the serine supplies its oxygen atom to form the C-terminus of the beta chain, while the remainder of the serine residue undergoes an oxidative deamination to produce ammonia and the pyruvoyl prosthetic group on the alpha chain. During this reaction, the Ser that is part of the protease active site of the proenzyme becomes the pyruvoyl prosthetic group, which constitutes an essential element of the active site of the mature decarboxylase.

Its subcellular location is the cell membrane. It carries out the reaction a 1,2-diacyl-sn-glycero-3-phospho-L-serine + H(+) = a 1,2-diacyl-sn-glycero-3-phosphoethanolamine + CO2. Its pathway is phospholipid metabolism; phosphatidylethanolamine biosynthesis; phosphatidylethanolamine from CDP-diacylglycerol: step 2/2. Its function is as follows. Catalyzes the formation of phosphatidylethanolamine (PtdEtn) from phosphatidylserine (PtdSer). This chain is Phosphatidylserine decarboxylase proenzyme, found in Helicobacter pylori (strain Shi470).